The chain runs to 249 residues: MILLISDLHLEEERPDITRAFLDLLHHRARGAQALYILGDFFEAWIGDDGMTPFQRSICAALRELSDSGTPIFIMHGNRDFLIGKAFCKAAGATLLKDPSVVQLHGEPVLLMHGDSLCTRDVGYMKLRRILRNPIVLFILRHLPLRTRHKLARKLRSESRAQTRMKANDIVDVTPEEVPRVMQQFGVRTLVHGHTHRPAIHKLQIGDQAAKRIVLGDWDKQGWALQVDEQGFQLAAFDFVNPQLALPGA.

Mn(2+) contacts are provided by Asp-7, His-9, Asp-40, Asn-78, and His-113. 78-79 contributes to the substrate binding site; sequence NR. The substrate site is built by Asp-121, Ser-159, Thr-163, Lys-166, and His-194. Positions 194 and 196 each coordinate Mn(2+).

Belongs to the LpxH family. It depends on Mn(2+) as a cofactor.

The protein resides in the cell inner membrane. It catalyses the reaction UDP-2-N,3-O-bis[(3R)-3-hydroxytetradecanoyl]-alpha-D-glucosamine + H2O = 2-N,3-O-bis[(3R)-3-hydroxytetradecanoyl]-alpha-D-glucosaminyl 1-phosphate + UMP + 2 H(+). Its pathway is glycolipid biosynthesis; lipid IV(A) biosynthesis; lipid IV(A) from (3R)-3-hydroxytetradecanoyl-[acyl-carrier-protein] and UDP-N-acetyl-alpha-D-glucosamine: step 4/6. In terms of biological role, hydrolyzes the pyrophosphate bond of UDP-2,3-diacylglucosamine to yield 2,3-diacylglucosamine 1-phosphate (lipid X) and UMP by catalyzing the attack of water at the alpha-P atom. Involved in the biosynthesis of lipid A, a phosphorylated glycolipid that anchors the lipopolysaccharide to the outer membrane of the cell. This chain is UDP-2,3-diacylglucosamine hydrolase, found in Pseudomonas fluorescens (strain SBW25).